Here is a 103-residue protein sequence, read N- to C-terminus: UPF0145 protein Dred_2155 (103 aa).

This sequence belongs to the UPF0145 family.

This is UPF0145 protein Dred_2155 from Desulforamulus reducens (strain ATCC BAA-1160 / DSM 100696 / MI-1) (Desulfotomaculum reducens).